A 138-amino-acid polypeptide reads, in one-letter code: Nucleoside diphosphate kinase (138 aa).

Residues Lys-9, Phe-57, Arg-85, Thr-91, Arg-102, and Asn-112 each contribute to the ATP site. The active-site Pros-phosphohistidine intermediate is His-120.

It belongs to the NDK family. Homotetramer. Requires Mg(2+) as cofactor.

The protein localises to the cytoplasm. The catalysed reaction is a 2'-deoxyribonucleoside 5'-diphosphate + ATP = a 2'-deoxyribonucleoside 5'-triphosphate + ADP. The enzyme catalyses a ribonucleoside 5'-diphosphate + ATP = a ribonucleoside 5'-triphosphate + ADP. Functionally, major role in the synthesis of nucleoside triphosphates other than ATP. The ATP gamma phosphate is transferred to the NDP beta phosphate via a ping-pong mechanism, using a phosphorylated active-site intermediate. This chain is Nucleoside diphosphate kinase, found in Streptococcus agalactiae serotype III (strain NEM316).